The sequence spans 107 residues: MTKSELVAQLATRFPQLVLKDADFAVKTMLDAMSEALANGHRIEIRGFGSFGLNRRPSRVGRNPKSGEKVLVPEKYVPHFKPGKELRERVDRRAGEPLKAEDPDDDL.

The span at 82–101 (PGKELRERVDRRAGEPLKAE) shows a compositional bias: basic and acidic residues. A disordered region spans residues 82 to 107 (PGKELRERVDRRAGEPLKAEDPDDDL).

It belongs to the bacterial histone-like protein family. Heterodimer of an alpha and a beta chain.

In terms of biological role, this protein is one of the two subunits of integration host factor, a specific DNA-binding protein that functions in genetic recombination as well as in transcriptional and translational control. The protein is Integration host factor subunit beta of Paraburkholderia xenovorans (strain LB400).